Reading from the N-terminus, the 342-residue chain is Anthranilate phosphoribosyltransferase (342 aa).

5-phospho-alpha-D-ribose 1-diphosphate-binding positions include Gly79, Gly82–Asp83, Thr87, Asn89–Thr92, Lys107–Ser115, and Ser119. Gly79 contacts anthranilate. Residue Ser91 coordinates Mg(2+). Asn110 provides a ligand contact to anthranilate. Arg165 provides a ligand contact to anthranilate. The Mg(2+) site is built by Asp223 and Glu224.

The protein belongs to the anthranilate phosphoribosyltransferase family. In terms of assembly, homodimer. Requires Mg(2+) as cofactor.

It catalyses the reaction N-(5-phospho-beta-D-ribosyl)anthranilate + diphosphate = 5-phospho-alpha-D-ribose 1-diphosphate + anthranilate. It functions in the pathway amino-acid biosynthesis; L-tryptophan biosynthesis; L-tryptophan from chorismate: step 2/5. Its function is as follows. Catalyzes the transfer of the phosphoribosyl group of 5-phosphorylribose-1-pyrophosphate (PRPP) to anthranilate to yield N-(5'-phosphoribosyl)-anthranilate (PRA). In Buchnera aphidicola subsp. Acyrthosiphon pisum (strain 5A), this protein is Anthranilate phosphoribosyltransferase.